A 211-amino-acid polypeptide reads, in one-letter code: N,O-diacetylmuramidase (211 aa).

Residues Asp6 and Glu100 contribute to the active site. An intrachain disulfide couples Cys108 to Cys147.

It belongs to the glycosyl hydrolase 25 family.

It localises to the secreted. The protein localises to the extracellular space. It catalyses the reaction Hydrolysis of (1-&gt;4)-beta-linkages between N-acetylmuramic acid and N-acetyl-D-glucosamine residues in a peptidoglycan and between N-acetyl-D-glucosamine residues in chitodextrins.. Its function is as follows. This enzyme has both lysozyme (acetylmuramidase) and diacetylmuramidase activities. This chain is N,O-diacetylmuramidase, found in Chalaropsis sp.